The following is a 495-amino-acid chain: 3-octaprenyl-4-hydroxybenzoate carboxy-lyase (495 aa).

Asparagine 172 provides a ligand contact to Mn(2+). Prenylated FMN is bound by residues 175–177 (IYR), 189–191 (RWL), and 194–195 (RG). Glutamate 238 provides a ligand contact to Mn(2+). Residue aspartate 287 is the Proton donor of the active site.

It belongs to the UbiD family. In terms of assembly, homohexamer. Requires prenylated FMN as cofactor. Mn(2+) serves as cofactor.

It is found in the cell membrane. The enzyme catalyses a 4-hydroxy-3-(all-trans-polyprenyl)benzoate + H(+) = a 2-(all-trans-polyprenyl)phenol + CO2. It participates in cofactor biosynthesis; ubiquinone biosynthesis. Catalyzes the decarboxylation of 3-octaprenyl-4-hydroxy benzoate to 2-octaprenylphenol, an intermediate step in ubiquinone biosynthesis. The chain is 3-octaprenyl-4-hydroxybenzoate carboxy-lyase from Yersinia enterocolitica serotype O:8 / biotype 1B (strain NCTC 13174 / 8081).